The chain runs to 98 residues: Small ribosomal subunit protein bS6 (98 aa).

This sequence belongs to the bacterial ribosomal protein bS6 family.

Functionally, binds together with bS18 to 16S ribosomal RNA. The sequence is that of Small ribosomal subunit protein bS6 from Staphylococcus haemolyticus (strain JCSC1435).